We begin with the raw amino-acid sequence, 405 residues long: MTKFRSSIAVKKGMCTLFLLFIYVLGSRIALPFVDLNSRNFLGGSAAYLDFSVALTGGNLRSLSLFSIGLSPWMSAMILWQMFSFSKKLGLNSVSSEVQDRRKMYLTLGIALIQALALTTNLPVQAPYNPFLVFLLNTSLLVAGTFFLVWLSDINATIGVGGPVVILLASMVASLPQDIIQSIQVHKISLGLLFLLLVLGVLFTYLVVLFYRARYRIPINKIGLHSRFKRYSYLEIMLNPAGGMPYMYVMSLMGLPSYLLLLLQHLDKGNPLYSAMLEQYAMGKPLWIYAYILILFVFSIAFAFVNVSGQQIADQMKQSGDYIYGVYPGEDTSRFINRLVLRFALIGAVFNVTLAGVPILFVLQDESLLKVSMIPGLFLILSGMLFTIHDELQALRLNERYQPLF.

The next 10 helical transmembrane spans lie at 14 to 34, 65 to 85, 104 to 124, 131 to 151, 156 to 176, 190 to 210, 243 to 263, 285 to 305, 343 to 363, and 368 to 388; these read MCTLFLLFIYVLGSRIALPFV, LFSIGLSPWMSAMILWQMFSF, MYLTLGIALIQALALTTNLPV, FLVFLLNTSLLVAGTFFLVWL, ATIGVGGPVVILLASMVASLP, LGLLFLLLVLGVLFTYLVVLF, GMPYMYVMSLMGLPSYLLLLL, PLWIYAYILILFVFSIAFAFV, FALIGAVFNVTLAGVPILFVL, and LLKVSMIPGLFLILSGMLFTI.

Belongs to the SecY/SEC61-alpha family. SecY2 subfamily. As to quaternary structure, component of the accessory SecA2/SecY2 protein translocase complex required to export cell wall proteins. May form heterotrimers with SecE and SecG subunits.

Its subcellular location is the cell membrane. Its function is as follows. Part of the accessory SecA2/SecY2 system specifically required for export of possible cell wall proteins. The central subunit of a protein translocation channel. This Streptococcus oralis (strain Uo5) protein is Accessory Sec system protein translocase subunit SecY2.